The sequence spans 374 residues: Lipoyl synthase, mitochondrial (374 aa).

Residues Cys101, Cys106, Cys112, Cys132, Cys136, Cys139, and Ser347 each contribute to the [4Fe-4S] cluster site. Positions 117 to 336 constitute a Radical SAM core domain; the sequence is ENGTQTATIM…EERGNDLGFL (220 aa).

The protein belongs to the radical SAM superfamily. Lipoyl synthase family. [4Fe-4S] cluster serves as cofactor.

Its subcellular location is the mitochondrion. The catalysed reaction is [[Fe-S] cluster scaffold protein carrying a second [4Fe-4S](2+) cluster] + N(6)-octanoyl-L-lysyl-[protein] + 2 oxidized [2Fe-2S]-[ferredoxin] + 2 S-adenosyl-L-methionine + 4 H(+) = [[Fe-S] cluster scaffold protein] + N(6)-[(R)-dihydrolipoyl]-L-lysyl-[protein] + 4 Fe(3+) + 2 hydrogen sulfide + 2 5'-deoxyadenosine + 2 L-methionine + 2 reduced [2Fe-2S]-[ferredoxin]. The protein operates within protein modification; protein lipoylation via endogenous pathway; protein N(6)-(lipoyl)lysine from octanoyl-[acyl-carrier-protein]: step 2/2. In terms of biological role, catalyzes the radical-mediated insertion of two sulfur atoms into the C-6 and C-8 positions of the octanoyl moiety bound to the lipoyl domains of lipoate-dependent enzymes, thereby converting the octanoylated domains into lipoylated derivatives. This chain is Lipoyl synthase, mitochondrial, found in Drosophila pseudoobscura pseudoobscura (Fruit fly).